Reading from the N-terminus, the 283-residue chain is ATP synthase gamma chain (283 aa).

It belongs to the ATPase gamma chain family. F-type ATPases have 2 components, CF(1) - the catalytic core - and CF(0) - the membrane proton channel. CF(1) has five subunits: alpha(3), beta(3), gamma(1), delta(1), epsilon(1). CF(0) has three main subunits: a, b and c.

Its subcellular location is the cell membrane. Functionally, produces ATP from ADP in the presence of a proton gradient across the membrane. The gamma chain is believed to be important in regulating ATPase activity and the flow of protons through the CF(0) complex. This is ATP synthase gamma chain from Clostridium perfringens (strain ATCC 13124 / DSM 756 / JCM 1290 / NCIMB 6125 / NCTC 8237 / Type A).